The following is a 783-amino-acid chain: Aconitate hydratase, mitochondrial (783 aa).

Residues 1–25 (MITTRLARMGALAPKSRLLFGTRGM) constitute a mitochondrion transit peptide. Residues Gln102 and 195–197 (DSH) contribute to the substrate site. [4Fe-4S] cluster contacts are provided by Cys388, Cys451, and Cys454. Arg477 and Arg482 together coordinate substrate. The tract at residues 524–555 (EFKLKAPTGDGLPSRGYDPGRDTYQAPPTDRS) is disordered. Residues Arg610 and 673 to 674 (SR) contribute to the substrate site.

It belongs to the aconitase/IPM isomerase family. Requires [4Fe-4S] cluster as cofactor.

It is found in the mitochondrion. The enzyme catalyses citrate = D-threo-isocitrate. It carries out the reaction (2R)-homocitrate = cis-homoaconitate + H2O. It participates in carbohydrate metabolism; tricarboxylic acid cycle; isocitrate from oxaloacetate: step 2/2. It functions in the pathway amino-acid biosynthesis; L-lysine biosynthesis via AAA pathway; L-alpha-aminoadipate from 2-oxoglutarate: step 2/5. Its function is as follows. Catalyzes the isomerization of citrate to isocitrate via cis-aconitate, a step in the citric acid cycle. Also catalyzes the reversible dehydration of (R)-homocitrate to cis-homoaconitate, a step in the alpha-aminoadipate pathway for lysine biosynthesis. This Emericella nidulans (strain FGSC A4 / ATCC 38163 / CBS 112.46 / NRRL 194 / M139) (Aspergillus nidulans) protein is Aconitate hydratase, mitochondrial (acoA).